A 246-amino-acid polypeptide reads, in one-letter code: MIELGVNIDHVATLRQQRHTVYPDPVQAALRAEDAGADLITLHLREDRRHILDADVHAIRPLLRTRMNLECAITPEMLDIACAVRPSDVCLVPEKRTELTTEGGLEVAGALDAVRDAVARLHDAGIRVSLFIDPDIAQIQAAAQAGATVIELHTGAYAEAPDGQAGPELDRLRAALAEGLRHGMRVNAGHGLHYGNVAPIAALDGIAELNIGHAIVAQAVFDGWEKAVRDMKALMVQARQQALRGR.

Asn-7 is a binding site for 3-amino-2-oxopropyl phosphate. 9-10 (DH) is a binding site for 1-deoxy-D-xylulose 5-phosphate. Arg-18 serves as a coordination point for 3-amino-2-oxopropyl phosphate. His-43 acts as the Proton acceptor in catalysis. The 1-deoxy-D-xylulose 5-phosphate site is built by Arg-45 and His-50. Catalysis depends on Glu-70, which acts as the Proton acceptor. Thr-100 is a 1-deoxy-D-xylulose 5-phosphate binding site. The Proton donor role is filled by His-190. 3-amino-2-oxopropyl phosphate is bound by residues Gly-191 and 212–213 (GH).

Belongs to the PNP synthase family. As to quaternary structure, homooctamer; tetramer of dimers.

Its subcellular location is the cytoplasm. The catalysed reaction is 3-amino-2-oxopropyl phosphate + 1-deoxy-D-xylulose 5-phosphate = pyridoxine 5'-phosphate + phosphate + 2 H2O + H(+). The protein operates within cofactor biosynthesis; pyridoxine 5'-phosphate biosynthesis; pyridoxine 5'-phosphate from D-erythrose 4-phosphate: step 5/5. Functionally, catalyzes the complicated ring closure reaction between the two acyclic compounds 1-deoxy-D-xylulose-5-phosphate (DXP) and 3-amino-2-oxopropyl phosphate (1-amino-acetone-3-phosphate or AAP) to form pyridoxine 5'-phosphate (PNP) and inorganic phosphate. The sequence is that of Pyridoxine 5'-phosphate synthase from Bordetella petrii (strain ATCC BAA-461 / DSM 12804 / CCUG 43448).